Reading from the N-terminus, the 523-residue chain is (R)-citramalate synthase (523 aa).

The region spanning 6–272 (VEVLDTTLRD…KGNESLKKLK (267 aa)) is the Pyruvate carboxyltransferase domain.

It belongs to the alpha-IPM synthase/homocitrate synthase family.

The enzyme catalyses pyruvate + acetyl-CoA + H2O = (3R)-citramalate + CoA + H(+). It participates in amino-acid biosynthesis; L-isoleucine biosynthesis; 2-oxobutanoate from pyruvate: step 1/3. Inhibited by isoleucine. Its function is as follows. Catalyzes the condensation of pyruvate and acetyl-coenzyme A to form (R)-citramalate. Makes part of a pathway for isoleucine biosynthesis, i.e. the citramalate-dependent pathway. Also displays a low alpha-isopropylmalate synthase activity, using 2-oxoisovalerate as substrate, but is unable to use 2-oxoglutarate. The sequence is that of (R)-citramalate synthase from Sulfolobus acidocaldarius (strain ATCC 33909 / DSM 639 / JCM 8929 / NBRC 15157 / NCIMB 11770).